A 512-amino-acid chain; its full sequence is Sporulation-regulated protein 3 (512 aa).

A disordered region spans residues 31-68 (RQSSQGQYAVDSHPPKSPELKHRRQRSSSFVNGKCRNR). A Septin-type G domain is found at 106-365 (NGIDFTLMVA…EKCRSEMLRT (260 aa)). The interval 116-123 (GQSGLGKT) is G1 motif. GTP is bound by residues 116–123 (GQSGLGKT), glycine 168, 247–255 (KSDLLTKEE), and arginine 315. The segment at 165 to 168 (DTPG) is G3 motif. The G4 motif stretch occupies residues 246-249 (AKSD). 2 coiled-coil regions span residues 376-406 (TKSVDITEEQRKFLEEEMNFDEIEENKLKNY) and 451-496 (RDWK…KSSN).

Belongs to the TRAFAC class TrmE-Era-EngA-EngB-Septin-like GTPase superfamily. Septin GTPase family. In terms of assembly, interacts with other septin proteins such as SPR28 to form a ring at the bud neck.

Its subcellular location is the prospore membrane. It is found in the bud neck. Its function is as follows. Septins are GTPases involved in cytokinesis that assemble into filaments and form a ring at the cleavage site. May act by recruiting MYO1 and HOF1, a protein involved in septation, to the site of cleavage. Septins are also involved in cell morphogenesis, bud site selection, chitin deposition, cell cycle regulation, cell compartmentalization and spore wall formation. The protein is Sporulation-regulated protein 3 (SPR3) of Saccharomyces cerevisiae (strain ATCC 204508 / S288c) (Baker's yeast).